A 479-amino-acid polypeptide reads, in one-letter code: Sulfate adenylyltransferase subunit 1 (479 aa).

Residues 25 to 239 (KSLLRFLTCG…EVLETVDIQR (215 aa)) enclose the tr-type G domain. The tract at residues 34 to 41 (GSVDDGKS) is G1. A GTP-binding site is contributed by 34–41 (GSVDDGKS). A G2 region spans residues 92 to 96 (GITID). Residues 113–116 (DTPG) form a G3 region. Residues 113-117 (DTPGH) and 168-171 (NKMD) each bind GTP. Residues 168–171 (NKMD) are G4. The interval 206–208 (SAL) is G5.

The protein belongs to the TRAFAC class translation factor GTPase superfamily. Classic translation factor GTPase family. CysN/NodQ subfamily. In terms of assembly, heterodimer composed of CysD, the smaller subunit, and CysN.

It carries out the reaction sulfate + ATP + H(+) = adenosine 5'-phosphosulfate + diphosphate. It functions in the pathway sulfur metabolism; hydrogen sulfide biosynthesis; sulfite from sulfate: step 1/3. With CysD forms the ATP sulfurylase (ATPS) that catalyzes the adenylation of sulfate producing adenosine 5'-phosphosulfate (APS) and diphosphate, the first enzymatic step in sulfur assimilation pathway. APS synthesis involves the formation of a high-energy phosphoric-sulfuric acid anhydride bond driven by GTP hydrolysis by CysN coupled to ATP hydrolysis by CysD. The protein is Sulfate adenylyltransferase subunit 1 of Salmonella dublin (strain CT_02021853).